The following is a 410-amino-acid chain: Polyprenol-phosphate-mannose-dependent alpha-(1-2)-phosphatidylinositol pentamannoside mannosyltransferase (410 aa).

The next 10 helical transmembrane spans lie at 31 to 51 (LAPMLLVVSILARLAWTYLVP), 96 to 116 (FAAIVFYPLHLLPFGVVAFIW), 160 to 180 (TFDYGQVNVVLVLAVLCAVST), 188 to 208 (LLVGLAAGIKLTPAVAGLYFL), 214 to 234 (AAVACSAAVFFATVGVSWLVV), 276 to 296 (GFGPLVLIGIGITAVLALLAW), 306 to 326 (LGGILVVSLFGLVLSPISWTH), 328 to 348 (WVWLIPLMMWLLHGPLSALRG), 351 to 371 (ILGWGWLALTLLGVPWLLSFA), and 384 to 404 (LAWAGLVYIVATLATLGWIAF).

It belongs to the glycosyltransferase 87 family.

The protein resides in the cell membrane. It functions in the pathway phospholipid metabolism; phosphatidylinositol metabolism. Catalyzes the alpha-1,2 addition of a mannose residue from polyprenol-phosphate-mannose (PPM) to a monoacyl phosphatidylinositol tetramannoside (AcPIM4) to generate a monoacyl phosphatidylinositol pentamannoside (AcPIM5). This is Polyprenol-phosphate-mannose-dependent alpha-(1-2)-phosphatidylinositol pentamannoside mannosyltransferase from Mycolicibacterium smegmatis (strain ATCC 700084 / mc(2)155) (Mycobacterium smegmatis).